Here is a 162-residue protein sequence, read N- to C-terminus: Xanthine-guanine phosphoribosyltransferase (162 aa).

5-phospho-alpha-D-ribose 1-diphosphate-binding positions include 41 to 42 (RG) and 92 to 100 (DDLVDTGNT). Asp-93 serves as a coordination point for Mg(2+). Residues Asp-96 and Ile-139 each contribute to the guanine site. 2 residues coordinate xanthine: Asp-96 and Ile-139. GMP is bound by residues 96–100 (DTGNT) and 138–139 (WI).

The protein belongs to the purine/pyrimidine phosphoribosyltransferase family. XGPT subfamily. In terms of assembly, homotetramer. The cofactor is Mg(2+).

Its subcellular location is the cell inner membrane. It carries out the reaction GMP + diphosphate = guanine + 5-phospho-alpha-D-ribose 1-diphosphate. It catalyses the reaction XMP + diphosphate = xanthine + 5-phospho-alpha-D-ribose 1-diphosphate. The enzyme catalyses IMP + diphosphate = hypoxanthine + 5-phospho-alpha-D-ribose 1-diphosphate. It participates in purine metabolism; GMP biosynthesis via salvage pathway; GMP from guanine: step 1/1. The protein operates within purine metabolism; XMP biosynthesis via salvage pathway; XMP from xanthine: step 1/1. In terms of biological role, purine salvage pathway enzyme that catalyzes the transfer of the ribosyl-5-phosphate group from 5-phospho-alpha-D-ribose 1-diphosphate (PRPP) to the N9 position of the 6-oxopurines guanine and xanthine to form the corresponding ribonucleotides GMP (guanosine 5'-monophosphate) and XMP (xanthosine 5'-monophosphate), with the release of PPi. To a lesser extent, also acts on hypoxanthine. The protein is Xanthine-guanine phosphoribosyltransferase of Chromohalobacter salexigens (strain ATCC BAA-138 / DSM 3043 / CIP 106854 / NCIMB 13768 / 1H11).